Reading from the N-terminus, the 993-residue chain is NACHT, LRR and PYD domains-containing protein 14 (993 aa).

The NACHT domain maps to 81 to 403; sequence QTVVLQGAAG…FYLLRENLEE (323 aa). 87 to 94 lines the ATP pocket; the sequence is GAAGIGKT. LRR repeat units lie at residues 636 to 657, 660 to 680, 688 to 708, 717 to 738, 745 to 765, 774 to 795, 802 to 822, 831 to 852, and 859 to 879; these read DLKE…LKCK, KLRV…QKLS, SLVF…KSLC, SLER…VLSS, RLTH…KLLS, TLQS…HLST, SLVH…KLLC, NLQE…DLAS, and NLWS…NILC.

The protein belongs to the NLRP family. In terms of tissue distribution, detected in adult ovary and testis. Detected in oocytes and in germ cell elements in seminiferous tubules in adult testis (at protein level).

Its subcellular location is the cytoplasm. May be involved in inflammation and spermatogenesis. The chain is NACHT, LRR and PYD domains-containing protein 14 (Nlrp14) from Mus musculus (Mouse).